The chain runs to 610 residues: V-type proton ATPase catalytic subunit A (610 aa).

Residue 245–252 participates in ATP binding; sequence GAFGCGKT.

Belongs to the ATPase alpha/beta chains family. V-ATPase is a heteromultimeric enzyme composed of a peripheral catalytic V1 complex (main components: subunits A, B, C, D, E, and F) attached to an integral membrane V0 proton pore complex (main component: the proteolipid protein).

It catalyses the reaction ATP + H2O + 4 H(+)(in) = ADP + phosphate + 5 H(+)(out). In terms of biological role, catalytic subunit of the peripheral V1 complex of vacuolar ATPase. V-ATPase vacuolar ATPase is responsible for acidifying a variety of intracellular compartments in eukaryotic cells. This is V-type proton ATPase catalytic subunit A from Trypanosoma congolense.